Here is a 91-residue protein sequence, read N- to C-terminus: Probable insulin-like peptide gamma-type 1 (91 aa).

Positions 1-26 (MSSYRQTLFILIILIVIILFVNEGQG) are cleaved as a signal peptide. Cystine bridges form between Cys37–Cys66, Cys49–Cys79, and Cys65–Cys70.

It belongs to the insulin family.

It localises to the secreted. This Caenorhabditis elegans protein is Probable insulin-like peptide gamma-type 1 (ins-11).